We begin with the raw amino-acid sequence, 555 residues long: CTP synthase (555 aa).

The segment at 1–271 (MVKRGKKTKY…DDKLAELFNI (271 aa)) is amidoligase domain. Residue Ser19 coordinates CTP. A UTP-binding site is contributed by Ser19. Residues 20–25 (SLGKGL) and Asp77 each bind ATP. Mg(2+)-binding residues include Asp77 and Glu145. CTP contacts are provided by residues 152-154 (DIE), 192-197 (KTKPTQ), and Lys228. UTP contacts are provided by residues 192–197 (KTKPTQ) and Lys228. Residues 297 to 538 (RVGVVGKYVE…VHAAREQRDQ (242 aa)) form the Glutamine amidotransferase type-1 domain. Gly358 is a binding site for L-glutamine. Cys385 functions as the Nucleophile; for glutamine hydrolysis in the catalytic mechanism. L-glutamine contacts are provided by residues 386 to 389 (LGLQ), Glu409, and Arg466. Catalysis depends on residues His511 and Glu513.

This sequence belongs to the CTP synthase family. As to quaternary structure, homotetramer.

The catalysed reaction is UTP + L-glutamine + ATP + H2O = CTP + L-glutamate + ADP + phosphate + 2 H(+). It carries out the reaction L-glutamine + H2O = L-glutamate + NH4(+). It catalyses the reaction UTP + NH4(+) + ATP = CTP + ADP + phosphate + 2 H(+). It functions in the pathway pyrimidine metabolism; CTP biosynthesis via de novo pathway; CTP from UDP: step 2/2. With respect to regulation, allosterically activated by GTP, when glutamine is the substrate; GTP has no effect on the reaction when ammonia is the substrate. The allosteric effector GTP functions by stabilizing the protein conformation that binds the tetrahedral intermediate(s) formed during glutamine hydrolysis. Inhibited by the product CTP, via allosteric rather than competitive inhibition. In terms of biological role, catalyzes the ATP-dependent amination of UTP to CTP with either L-glutamine or ammonia as the source of nitrogen. Regulates intracellular CTP levels through interactions with the four ribonucleotide triphosphates. The polypeptide is CTP synthase (Anaeromyxobacter sp. (strain Fw109-5)).